The primary structure comprises 271 residues: Urease accessory protein UreD (271 aa).

This sequence belongs to the UreD family. As to quaternary structure, ureD, UreF and UreG form a complex that acts as a GTP-hydrolysis-dependent molecular chaperone, activating the urease apoprotein by helping to assemble the nickel containing metallocenter of UreC. The UreE protein probably delivers the nickel.

The protein localises to the cytoplasm. In terms of biological role, required for maturation of urease via the functional incorporation of the urease nickel metallocenter. This Mycolicibacterium smegmatis (strain ATCC 700084 / mc(2)155) (Mycobacterium smegmatis) protein is Urease accessory protein UreD.